A 363-amino-acid polypeptide reads, in one-letter code: Isopentenyl-diphosphate delta-isomerase (363 aa).

15–16 (RK) contributes to the substrate binding site. FMN-binding positions include Ser-73, 74–76 (SMT), Ser-104, and Asn-133. 104–106 (SMR) contributes to the substrate binding site. Position 168 (Gln-168) interacts with substrate. Glu-169 lines the Mg(2+) pocket. FMN-binding positions include Lys-200, Thr-230, and 313-314 (AG).

It belongs to the IPP isomerase type 2 family. As to quaternary structure, homooctamer. Dimer of tetramers. It depends on FMN as a cofactor. NADPH serves as cofactor. The cofactor is Mg(2+).

The protein resides in the cytoplasm. It carries out the reaction isopentenyl diphosphate = dimethylallyl diphosphate. Functionally, involved in the biosynthesis of isoprenoids. Catalyzes the 1,3-allylic rearrangement of the homoallylic substrate isopentenyl (IPP) to its allylic isomer, dimethylallyl diphosphate (DMAPP). The chain is Isopentenyl-diphosphate delta-isomerase from Chlorobium phaeobacteroides (strain DSM 266 / SMG 266 / 2430).